The sequence spans 123 residues: UPF0102 protein Pcar_2217 (123 aa).

The protein belongs to the UPF0102 family.

In Syntrophotalea carbinolica (strain DSM 2380 / NBRC 103641 / GraBd1) (Pelobacter carbinolicus), this protein is UPF0102 protein Pcar_2217.